The sequence spans 257 residues: NAD-dependent protein deacetylase (257 aa).

Positions 3 to 252 (NGECLEGGRK…DLVLNEVKGI (250 aa)) constitute a Deacetylase sirtuin-type domain. Residues A29, T33, F40, R41, Q105, I107, D108, and H123 each contribute to the NAD(+) site. F40 provides a ligand contact to nicotinamide. Positions 107 and 108 each coordinate nicotinamide. Residue H123 is the Proton acceptor of the active site. C131, C134, C156, and C159 together coordinate Zn(2+). Positions 195, 196, and 220 each coordinate NAD(+).

This sequence belongs to the sirtuin family. Class U subfamily. It depends on Zn(2+) as a cofactor.

It localises to the cytoplasm. The enzyme catalyses N(6)-acetyl-L-lysyl-[protein] + NAD(+) + H2O = 2''-O-acetyl-ADP-D-ribose + nicotinamide + L-lysyl-[protein]. Functionally, NAD-dependent protein deacetylase which modulates the activities of several enzymes which are inactive in their acetylated form. Deacetylates the N-terminal lysine residue of Alba, the major archaeal chromatin protein and that, in turn, increases Alba's DNA binding affinity, thereby repressing transcription. The protein is NAD-dependent protein deacetylase of Caldivirga maquilingensis (strain ATCC 700844 / DSM 13496 / JCM 10307 / IC-167).